The following is a 359-amino-acid chain: Serpentine receptor class epsilon-33 (359 aa).

7 helical membrane passes run 29–49 (VIIS…VNVS), 65–85 (ILAL…FITI), 134–156 (YMYS…SVLI), 168–188 (PAIL…GLLF), 194–214 (LSAH…YVFV), 255–275 (LVFA…ALHY), and 285–305 (LIEN…MLSI).

The protein belongs to the nematode receptor-like protein sre family.

It is found in the membrane. The polypeptide is Serpentine receptor class epsilon-33 (sre-33) (Caenorhabditis elegans).